The chain runs to 795 residues: Lon protease (795 aa).

A Lon N-terminal domain is found at 7-213 (SQILVVRGQV…KIIQAGIEDL (207 aa)). 379 to 386 (GPPGVGKS) lines the ATP pocket. Residues 615–795 (VSLPGIVNGM…YSDIYNKLFS (181 aa)) enclose the Lon proteolytic domain. Catalysis depends on residues S702 and K745.

The protein belongs to the peptidase S16 family. In terms of assembly, homohexamer. Organized in a ring with a central cavity.

Its subcellular location is the cytoplasm. It catalyses the reaction Hydrolysis of proteins in presence of ATP.. Its function is as follows. ATP-dependent serine protease that mediates the selective degradation of mutant and abnormal proteins as well as certain short-lived regulatory proteins. Required for cellular homeostasis and for survival from DNA damage and developmental changes induced by stress. Degrades polypeptides processively to yield small peptide fragments that are 5 to 10 amino acids long. Binds to DNA in a double-stranded, site-specific manner. This Mycoplasma genitalium (strain ATCC 33530 / DSM 19775 / NCTC 10195 / G37) (Mycoplasmoides genitalium) protein is Lon protease.